A 1128-amino-acid chain; its full sequence is Major DNA-binding protein (1128 aa).

A zinc finger spans residues Cys-453–His-466. Residues Gln-1098 to Leu-1128 are required for nuclear localization.

It belongs to the herpesviridae major DNA-binding protein family. As to quaternary structure, homooligomers. Forms double-helical filaments necessary for the formation of replication compartments within the host nucleus. Interacts with the origin-binding protein. Interacts with the helicase primase complex; this interaction stimulates primer synthesis activity of the helicase-primase complex. Interacts with the DNA polymerase. Interacts with the alkaline exonuclease; this interaction increases its nuclease processivity.

Its subcellular location is the host nucleus. Functionally, single-stranded DNA-binding protein required for DNA replication. Its function is as follows. Plays several crucial roles in viral infection. Participates in the opening of the viral DNA origin to initiate replication by interacting with the origin-binding protein. May disrupt loops, hairpins and other secondary structures present on ssDNA to reduce and eliminate pausing of viral DNA polymerase at specific sites during elongation. Promotes viral DNA recombination by performing strand-transfer, characterized by the ability to transfer a DNA strand from a linear duplex to a complementary single-stranded DNA circle. Can also catalyze the renaturation of complementary single strands. Additionally, reorganizes the host cell nucleus, leading to the formation of prereplicative sites and replication compartments. This process is driven by the protein which can form double-helical filaments in the absence of DNA. The chain is Major DNA-binding protein from Saimiri sciureus (Common squirrel monkey).